A 175-amino-acid polypeptide reads, in one-letter code: Small ribosomal subunit protein uS9 (175 aa).

The protein belongs to the universal ribosomal protein uS9 family.

The sequence is that of Small ribosomal subunit protein uS9 from Streptomyces griseus subsp. griseus (strain JCM 4626 / CBS 651.72 / NBRC 13350 / KCC S-0626 / ISP 5235).